Here is a 320-residue protein sequence, read N- to C-terminus: MNKFKNIAVYGGGSFGTSLASVVARNCNNVTLFLRNETILKEILYKKTNVQYLGDIKLPTNLQATTNLSVIKDFDLIIIAVPSYAFVDAIKLLKTYGISKDNTLLVATKGFAHNPTELLSDRLNTLLPDNPIGFLSGPNLAKELAKNLHTSASIASLDIDIANKIAHNLSSKTFTTNTTIDIVTLQVAGALKNIFAIKSGIDLAREQGANSRAMLIVAALKEITTLSKVLGGMQKNSDILLEAGVVGDLVLTCYSLGSRNTKFGYEFEISMDKKKFLREYKELVEGREALKLVLDLIKKYNLHMPIVSEVASLIHCGIYI.

Positions 14, 15, 35, and 109 each coordinate NADPH. 2 residues coordinate sn-glycerol 3-phosphate: Lys109 and Gly137. Residue Ala141 coordinates NADPH. The sn-glycerol 3-phosphate site is built by Lys192, Asp248, Ser258, Arg259, and Asn260. The active-site Proton acceptor is the Lys192. Arg259 is an NADPH binding site. The NADPH site is built by Leu283 and Glu285.

It belongs to the NAD-dependent glycerol-3-phosphate dehydrogenase family.

Its subcellular location is the cytoplasm. The enzyme catalyses sn-glycerol 3-phosphate + NAD(+) = dihydroxyacetone phosphate + NADH + H(+). It carries out the reaction sn-glycerol 3-phosphate + NADP(+) = dihydroxyacetone phosphate + NADPH + H(+). Its pathway is membrane lipid metabolism; glycerophospholipid metabolism. Functionally, catalyzes the reduction of the glycolytic intermediate dihydroxyacetone phosphate (DHAP) to sn-glycerol 3-phosphate (G3P), the key precursor for phospholipid synthesis. This Rickettsia typhi (strain ATCC VR-144 / Wilmington) protein is Glycerol-3-phosphate dehydrogenase [NAD(P)+].